A 177-amino-acid chain; its full sequence is Ribulose bisphosphate carboxylase small subunit, chloroplastic 4 (177 aa).

The N-terminal 56 residues, 1–56 (MASSMMASTAAAVARAGPAQTNMVPFNACRSSVPFPATRKANNDLSTLPSNGGRVS), are a transit peptide targeting the chloroplast.

It belongs to the RuBisCO small chain family. Heterohexadecamer of 8 large and 8 small subunits.

Its subcellular location is the plastid. It localises to the chloroplast. Functionally, ruBisCO catalyzes two reactions: the carboxylation of D-ribulose 1,5-bisphosphate, the primary event in carbon dioxide fixation, as well as the oxidative fragmentation of the pentose substrate. Both reactions occur simultaneously and in competition at the same active site. Although the small subunit is not catalytic it is essential for maximal activity. In Lemna gibba (Swollen duckweed), this protein is Ribulose bisphosphate carboxylase small subunit, chloroplastic 4.